Here is a 394-residue protein sequence, read N- to C-terminus: NAD(P)H-quinone oxidoreductase subunit H (394 aa).

The protein belongs to the complex I 49 kDa subunit family. As to quaternary structure, NDH-1 can be composed of about 15 different subunits; different subcomplexes with different compositions have been identified which probably have different functions.

Its subcellular location is the cellular thylakoid membrane. It catalyses the reaction a plastoquinone + NADH + (n+1) H(+)(in) = a plastoquinol + NAD(+) + n H(+)(out). The catalysed reaction is a plastoquinone + NADPH + (n+1) H(+)(in) = a plastoquinol + NADP(+) + n H(+)(out). NDH-1 shuttles electrons from an unknown electron donor, via FMN and iron-sulfur (Fe-S) centers, to quinones in the respiratory and/or the photosynthetic chain. The immediate electron acceptor for the enzyme in this species is believed to be plastoquinone. Couples the redox reaction to proton translocation, and thus conserves the redox energy in a proton gradient. Cyanobacterial NDH-1 also plays a role in inorganic carbon-concentration. The polypeptide is NAD(P)H-quinone oxidoreductase subunit H (Synechococcus sp. (strain CC9902)).